The chain runs to 195 residues: Adenylate kinase (195 aa).

8–16 is a binding site for ATP; it reads GIPGVGKTT.

It belongs to the archaeal adenylate kinase family. In terms of assembly, homotrimer.

It is found in the cytoplasm. It catalyses the reaction AMP + ATP = 2 ADP. This is Adenylate kinase (adkA) from Saccharolobus solfataricus (strain ATCC 35092 / DSM 1617 / JCM 11322 / P2) (Sulfolobus solfataricus).